A 640-amino-acid chain; its full sequence is PAN2-PAN3 deadenylation complex subunit PAN3 (640 aa).

The segment at 17–46 adopts a C3H1-type zinc-finger fold; the sequence is ENKDILCRNVLIYGHCRYEDQGCTYNHDQN. Polar residues-rich tracts occupy residues 43–53 and 63–87; these read HDQNKNSSQPE and DSPS…SQAA. The segment at 43–101 is disordered; sequence HDQNKNSSQPEAPSKKMFNVDSPSFTPSGQSTVLPKKTTLSSQAASAAPFTPRGGGTPT. The tract at residues 237–498 is pseudokinase domain; the sequence is QVIPNSGLPQ…TIEHFMTGIA (262 aa). ATP contacts are provided by residues Asn263, Arg288, 338 to 345, and 397 to 398; these read DFHPLSKT and SK. Residues 499-537 are a coiled coil; the sequence is SQMTTFFDLALQDNDEKLFHLAREVENGRIARSLMKLLT. Residues 538 to 640 are knob domain; the sequence is ILERGDYDGV…SKTGAPGANT (103 aa).

The protein belongs to the protein kinase superfamily. PAN3 family. As to quaternary structure, homodimer. Forms a heterotrimer with a catalytic subunit PAN2 to form the poly(A)-nuclease (PAN) deadenylation complex. Interacts (via PAM-2 motif) with poly(A)-binding protein PAB1 (via PABC domain), conferring substrate specificity of the enzyme complex.

The protein localises to the cytoplasm. Its function is as follows. Regulatory subunit of the poly(A)-nuclease (PAN) deadenylation complex, one of two cytoplasmic mRNA deadenylases involved in mRNA turnover. PAN specifically shortens poly(A) tails of RNA and the activity is stimulated by poly(A)-binding protein PAB1. PAN deadenylation is followed by rapid degradation of the shortened mRNA tails by the CCR4-NOT complex. Deadenylated mRNAs are then degraded by two alternative mechanisms, namely exosome-mediated 3'-5' exonucleolytic degradation, or deadenylation-dependent mRNA decaping and subsequent 5'-3' exonucleolytic degradation by XRN1. May also be involved in post-transcriptional maturation of mRNA poly(A) tails. PAN3 acts as a positive regulator for PAN activity, recruiting the catalytic subunit PAN2 to mRNA via its interaction with RNA and with PAB1. This chain is PAN2-PAN3 deadenylation complex subunit PAN3, found in Chaetomium thermophilum (strain DSM 1495 / CBS 144.50 / IMI 039719) (Thermochaetoides thermophila).